We begin with the raw amino-acid sequence, 416 residues long: Enolase (416 aa).

Glutamine 160 serves as a coordination point for (2R)-2-phosphoglycerate. Glutamate 204 serves as the catalytic Proton donor. 3 residues coordinate Mg(2+): aspartate 239, glutamate 280, and aspartate 306. The (2R)-2-phosphoglycerate site is built by lysine 331, arginine 360, serine 361, and lysine 382. The Proton acceptor role is filled by lysine 331.

It belongs to the enolase family. Mg(2+) is required as a cofactor.

It localises to the cytoplasm. Its subcellular location is the secreted. The protein localises to the cell surface. It carries out the reaction (2R)-2-phosphoglycerate = phosphoenolpyruvate + H2O. It participates in carbohydrate degradation; glycolysis; pyruvate from D-glyceraldehyde 3-phosphate: step 4/5. Its function is as follows. Catalyzes the reversible conversion of 2-phosphoglycerate (2-PG) into phosphoenolpyruvate (PEP). It is essential for the degradation of carbohydrates via glycolysis. This chain is Enolase, found in Sulfurisphaera tokodaii (strain DSM 16993 / JCM 10545 / NBRC 100140 / 7) (Sulfolobus tokodaii).